The primary structure comprises 490 residues: One cut domain family member 3 (490 aa).

Disordered regions lie at residues 130–155 (GAHG…QRLA), 193–213 (LSPL…PPPP), and 287–316 (HGPH…AAAE). Over residues 143-152 (ATAPPPPPPQ) the composition is skewed to pro residues. The span at 290–311 (HSGGGGPGGGGGAGGGSGGPGA) shows a compositional bias: gly residues. Residues 309–395 (PGAGAAAEEI…QRMSALRLAA (87 aa)) constitute a DNA-binding region (CUT). Positions 411–470 (PKKQRLVFTDLQRRTLIAIFKENKRPSKEMQATISQQLGLELNTVSNFFMNARRRCMNRW) form a DNA-binding region, homeobox.

It belongs to the CUT homeobox family. Specifically expressed in brain, stomach and gut. Within the gut, expressed only in duodenum and jejunum.

Its subcellular location is the nucleus. Its function is as follows. Transcriptional activator. Binds the consensus DNA sequence 5'-DHWATTGAYTWWD-3' on a variety of gene promoters such as those of HNF3B and TTR. The polypeptide is One cut domain family member 3 (Onecut3) (Mus musculus (Mouse)).